We begin with the raw amino-acid sequence, 232 residues long: LexA repressor (232 aa).

Residues 1-25 form a disordered region; that stretch reads MSDDSSDSTDAPGTSRSRDSGLTER. Over residues 16–25 the composition is skewed to basic and acidic residues; that stretch reads RSRDSGLTER. A DNA-binding region (H-T-H motif) is located at residues 46-66; it reads IREIGDAVGLTSTSSVAHQLR. Catalysis depends on for autocatalytic cleavage activity residues Ser-156 and Lys-193.

This sequence belongs to the peptidase S24 family. In terms of assembly, homodimer.

The enzyme catalyses Hydrolysis of Ala-|-Gly bond in repressor LexA.. Functionally, represses a number of genes involved in the response to DNA damage (SOS response), including recA and lexA. In the presence of single-stranded DNA, RecA interacts with LexA causing an autocatalytic cleavage which disrupts the DNA-binding part of LexA, leading to derepression of the SOS regulon and eventually DNA repair. In Mycolicibacterium gilvum (strain PYR-GCK) (Mycobacterium gilvum (strain PYR-GCK)), this protein is LexA repressor.